The chain runs to 228 residues: Carboxylesterase SOBER1 (228 aa).

Active-site charge relay system residues include Ser-106, Asp-160, and His-192.

Belongs to the AB hydrolase superfamily. AB hydrolase 2 family.

Its function is as follows. Possesses carboxylesterase activity in vitro with a preference for short acyl chain substrates. Functions as a negative regulator of the hypersensitive response (HR) triggered by the bacterial type III effector protein AvrBsT. Possesses phospholipase A2 (PLA2) activity and hydrolyzes phosphatidylcholine (PC), a lipid that is hydrolyzed by phospholipase D (PLD) to produce phosphatidic acid (PA). Required to suppress AvrBsT-dependent HR and PLD-dependent production of PA in response to AvrBsT elicitation. In Arabidopsis thaliana (Mouse-ear cress), this protein is Carboxylesterase SOBER1.